We begin with the raw amino-acid sequence, 106 residues long: Integration host factor subunit alpha (106 aa).

Belongs to the bacterial histone-like protein family. In terms of assembly, heterodimer of an alpha and a beta chain.

Functionally, this protein is one of the two subunits of integration host factor, a specific DNA-binding protein that functions in genetic recombination as well as in transcriptional and translational control. The chain is Integration host factor subunit alpha from Methylobacterium radiotolerans (strain ATCC 27329 / DSM 1819 / JCM 2831 / NBRC 15690 / NCIMB 10815 / 0-1).